The sequence spans 347 residues: MAEQPVDLSDQALADAVSAVRRAFDGASTLEDLAKAKTEYLGDRSPIALARQALGSLPKTERADAGKRVNVARTEAQTAYDERLAVLRAERDAAVLVAERIDVTLPSTRQPVGARHPITILAERVADTFVAMGWELAEGPEVETEQFNFDALNFPPDHPARSEQDTFQVAPDGSRQVLRTHTSPVQIRALLERELPVYIVSIGRTFRTDELDATHTPVFHQVEGLAVDKGLTMANLRGTLDAFARSEFGPQGRTRFRPHFFPFTEPSAEVDIWFPDKKGGPGWVEWGGCGMVNPNVLRACGIDPEVYSGFAFGMGLERTLQFRNGIPDMRDMVEGDVRFSLPFGVGA.

Position 265 (glutamate 265) interacts with Mg(2+).

Belongs to the class-II aminoacyl-tRNA synthetase family. Phe-tRNA synthetase alpha subunit type 1 subfamily. As to quaternary structure, tetramer of two alpha and two beta subunits. Mg(2+) is required as a cofactor.

Its subcellular location is the cytoplasm. It carries out the reaction tRNA(Phe) + L-phenylalanine + ATP = L-phenylalanyl-tRNA(Phe) + AMP + diphosphate + H(+). In Mycolicibacterium gilvum (strain PYR-GCK) (Mycobacterium gilvum (strain PYR-GCK)), this protein is Phenylalanine--tRNA ligase alpha subunit.